The following is a 114-amino-acid chain: Large ribosomal subunit protein bL19 (114 aa).

This sequence belongs to the bacterial ribosomal protein bL19 family.

Its function is as follows. This protein is located at the 30S-50S ribosomal subunit interface and may play a role in the structure and function of the aminoacyl-tRNA binding site. The polypeptide is Large ribosomal subunit protein bL19 (Listeria welshimeri serovar 6b (strain ATCC 35897 / DSM 20650 / CCUG 15529 / CIP 8149 / NCTC 11857 / SLCC 5334 / V8)).